The following is a 713-amino-acid chain: Low-density lipoprotein receptor-related protein 10 (713 aa).

The first 17 residues, 1 to 17 (MLSALPLLFLLLGGALA), serve as a signal peptide directing secretion. Residues 18 to 441 (RPDRITFPRS…WDCSYALPRK (424 aa)) lie on the Extracellular side of the membrane. Disulfide bonds link C29–C58 and C81–C99. The CUB 1 domain occupies 29-137 (CEAPPAVLSE…QGFLLTYSQD (109 aa)). N-linked (GlcNAc...) asparagine glycosylation is present at N57. N112 carries an N-linked (GlcNAc...) asparagine glycan. One can recognise an LDL-receptor class A 1 domain in the interval 140 to 176 (LCLQEEFQCLNHRCIPAAQRCDGIDACGDGSDEAGCS). 4 disulfides stabilise this stretch: C141-C153, C148-C166, C160-C175, and C193-C221. The region spanning 193-306 (CNLTLEDFYG…RGFNATYHVR (114 aa)) is the CUB 2 domain. N-linked (GlcNAc...) asparagine glycans are attached at residues N194 and N300. 3 consecutive LDL-receptor class A domains span residues 308–355 (YCLP…EGCP), 356–398 (GCPP…RRCR), and 399–435 (HCQPGNFRCRDEKCVYETWVCDGQPDCTDGSDEWDCS). Cystine bridges form between C309-C332, C316-C345, C339-C354, C357-C375, C364-C388, C382-C397, C400-C412, C407-C425, and C419-C434. A helical transmembrane segment spans residues 442–462 (VITAAVIGSLVCGLLLVIALG). The Cytoplasmic portion of the chain corresponds to 463-713 (CTCKLYAIRT…VEAEDEPLLA (251 aa)). Residues 566-636 (LLPRTNTPAR…TLPALATVSE (71 aa)) are disordered. The residue at position 596 (T596) is a Phosphothreonine. The span at 614-626 (PPLPIKTPIPTPS) shows a compositional bias: pro residues.

It belongs to the LDLR family. As to expression, highly expressed in heart, lung, liver and liver. Expressed at low level in brain and spleen. Weakly or not expressed in testis and skeletal muscle. In liver, it is expressed in hepatocytes and at higher level in sinusoidal lining. In the kidney, it is expressed in peritubular capillaries. In brain, it is expressed in the epithelium of the choroid plexus ependymal cells of the third ventricle pia matter, and to lesser extent in hippocampal fields CA2 and CA3.

Its subcellular location is the membrane. It localises to the coated pit. Functionally, probable receptor, which is involved in the internalization of lipophilic molecules and/or signal transduction. May be involved in the uptake of lipoprotein APOE in liver. The chain is Low-density lipoprotein receptor-related protein 10 (Lrp10) from Mus musculus (Mouse).